We begin with the raw amino-acid sequence, 394 residues long: Elongation factor Tu (394 aa).

Positions 10 to 204 constitute a tr-type G domain; it reads KPHVNVGTIG…ALDSYIPEPE (195 aa). Positions 19–26 are G1; the sequence is GHVDHGKT. Residue 19–26 participates in GTP binding; the sequence is GHVDHGKT. Threonine 26 is a binding site for Mg(2+). Residues 60-64 are G2; it reads GITIS. Positions 81-84 are G3; that stretch reads DCPG. Residues 81–85 and 136–139 each bind GTP; these read DCPGH and NKCD. The segment at 136-139 is G4; the sequence is NKCD. A G5 region spans residues 174–176; it reads SAL.

This sequence belongs to the TRAFAC class translation factor GTPase superfamily. Classic translation factor GTPase family. EF-Tu/EF-1A subfamily. In terms of assembly, monomer.

It is found in the cytoplasm. The catalysed reaction is GTP + H2O = GDP + phosphate + H(+). Functionally, GTP hydrolase that promotes the GTP-dependent binding of aminoacyl-tRNA to the A-site of ribosomes during protein biosynthesis. This Pseudoalteromonas atlantica (strain T6c / ATCC BAA-1087) protein is Elongation factor Tu.